We begin with the raw amino-acid sequence, 274 residues long: Aliphatic sulfonates import ATP-binding protein SsuB 2 (274 aa).

The 215-residue stretch at 21–235 (VQLRNVVRQF…DSGQAGFQLI (215 aa)) folds into the ABC transporter domain. 53-60 (GASGSGKT) serves as a coordination point for ATP.

Belongs to the ABC transporter superfamily. Aliphatic sulfonates importer (TC 3.A.1.17.2) family. In terms of assembly, the complex is composed of two ATP-binding proteins (SsuB), two transmembrane proteins (SsuC) and a solute-binding protein (SsuA).

It is found in the cell inner membrane. It catalyses the reaction ATP + H2O + aliphatic sulfonate-[sulfonate-binding protein]Side 1 = ADP + phosphate + aliphatic sulfonateSide 2 + [sulfonate-binding protein]Side 1.. Functionally, part of the ABC transporter complex SsuABC involved in aliphatic sulfonates import. Responsible for energy coupling to the transport system. The protein is Aliphatic sulfonates import ATP-binding protein SsuB 2 of Pseudomonas syringae pv. syringae (strain B728a).